Consider the following 192-residue polypeptide: Adenylate kinase (192 aa).

Residue 10–15 (GAGKGT) coordinates ATP. The interval 30–56 (GTGGMLRALEPESGEQIHLRIDRGHFA) is NMP. Residues T31, R36, 82 to 85 (GFPR), and Q89 contribute to the AMP site. An LID region spans residues 123–133 (KRGETENRADD). R124 is a binding site for ATP. The AMP site is built by R130 and R141. D169 lines the ATP pocket.

It belongs to the adenylate kinase family. As to quaternary structure, monomer.

It is found in the cytoplasm. The catalysed reaction is AMP + ATP = 2 ADP. It participates in purine metabolism; AMP biosynthesis via salvage pathway; AMP from ADP: step 1/1. Catalyzes the reversible transfer of the terminal phosphate group between ATP and AMP. Plays an important role in cellular energy homeostasis and in adenine nucleotide metabolism. This Rhodopirellula baltica (strain DSM 10527 / NCIMB 13988 / SH1) protein is Adenylate kinase.